Consider the following 274-residue polypeptide: Homeobox-leucine zipper protein HAT9 (274 aa).

Residues 64–74 (SSHSGVSSFSS) show a composition bias toward low complexity. A disordered region spans residues 64–96 (SSHSGVSSFSSGRVVKRERDGGEESPEEEEMTE). A DNA-binding region (homeobox) is located at residues 110-169 (SARKKLRLTKQQSALLEESFKDHSTLNPKQKQVLARQLNLRPRQVEVWFQNRRARTKLKQ). The interval 177–198 (LKKCCETLADENIRLQKEIQEL) is leucine-zipper.

The protein belongs to the HD-ZIP homeobox family. Class II subfamily.

Its subcellular location is the nucleus. Functionally, probable transcription factor. The sequence is that of Homeobox-leucine zipper protein HAT9 (HAT9) from Arabidopsis thaliana (Mouse-ear cress).